We begin with the raw amino-acid sequence, 159 residues long: 2-C-methyl-D-erythritol 2,4-cyclodiphosphate synthase (159 aa).

A divalent metal cation contacts are provided by Asp8 and His10. Residues 8 to 10 (DVH) and 34 to 35 (HS) contribute to the 4-CDP-2-C-methyl-D-erythritol 2-phosphate site. His42 lines the a divalent metal cation pocket. 4-CDP-2-C-methyl-D-erythritol 2-phosphate-binding positions include 56–58 (DIG), 61–65 (FPDTD), 100–106 (AQAPRML), 132–135 (TTTE), Phe139, and Arg142.

This sequence belongs to the IspF family. Homotrimer. Requires a divalent metal cation as cofactor.

The enzyme catalyses 4-CDP-2-C-methyl-D-erythritol 2-phosphate = 2-C-methyl-D-erythritol 2,4-cyclic diphosphate + CMP. It participates in isoprenoid biosynthesis; isopentenyl diphosphate biosynthesis via DXP pathway; isopentenyl diphosphate from 1-deoxy-D-xylulose 5-phosphate: step 4/6. Its function is as follows. Involved in the biosynthesis of isopentenyl diphosphate (IPP) and dimethylallyl diphosphate (DMAPP), two major building blocks of isoprenoid compounds. Catalyzes the conversion of 4-diphosphocytidyl-2-C-methyl-D-erythritol 2-phosphate (CDP-ME2P) to 2-C-methyl-D-erythritol 2,4-cyclodiphosphate (ME-CPP) with a corresponding release of cytidine 5-monophosphate (CMP). The chain is 2-C-methyl-D-erythritol 2,4-cyclodiphosphate synthase from Escherichia coli O45:K1 (strain S88 / ExPEC).